The sequence spans 501 residues: Solute carrier family 2, facilitated glucose transporter member 5 (501 aa).

At Met-1 the chain carries N-acetylmethionine. The Cytoplasmic segment spans residues Met-1 to Val-18. The chain crosses the membrane as a helical span at residues Leu-19 to Ile-39. Tyr-32 lines the D-fructose pocket. Over Asn-40–Thr-68 the chain is Extracellular. Residue Asn-51 is glycosylated (N-linked (GlcNAc...) asparagine). Residues Leu-69 to Pro-91 form a helical membrane-spanning segment. Residues Leu-92 to Arg-98 lie on the Cytoplasmic side of the membrane. Residues Lys-99–Ser-119 traverse the membrane as a helical segment. Residues Asp-120–Glu-126 are Extracellular-facing. The chain crosses the membrane as a helical span at residues Met-127 to Tyr-149. The Cytoplasmic portion of the chain corresponds to Leu-150 to Ala-161. The chain crosses the membrane as a helical span at residues Leu-162 to Leu-182. Residue Gln-167 participates in D-fructose binding. Topologically, residues Arg-183–Trp-192 are extracellular. A helical transmembrane segment spans residues Pro-193–Phe-213. Topologically, residues Pro-214–Gln-277 are cytoplasmic. Residues Val-278–Tyr-298 form a helical membrane-spanning segment. Residues Gln-288 and Ile-296–Tyr-298 each bind D-fructose. Over Tyr-299 to Asp-313 the chain is Extracellular. Residues Val-314–Phe-334 traverse the membrane as a helical segment. The Cytoplasmic segment spans residues Val-335 to Arg-342. A helical transmembrane segment spans residues Phe-343–Leu-363. The Extracellular segment spans residues Ala-364–Trp-371. A helical transmembrane segment spans residues Met-372–Ile-394. A D-fructose-binding site is contributed by His-387. At Pro-395–Tyr-412 the chain is on the cytoplasmic side. The chain crosses the membrane as a helical span at residues Met-413–Ile-433. Residue His-419 to Trp-420 participates in D-fructose binding. Residues Gln-434–Ala-439 lie on the Extracellular side of the membrane. The chain crosses the membrane as a helical span at residues Tyr-440–Ile-460. The Cytoplasmic portion of the chain corresponds to Pro-461–Gln-501.

This sequence belongs to the major facilitator superfamily. Sugar transporter (TC 2.A.1.1) family. Glucose transporter subfamily.

It localises to the apical cell membrane. The protein resides in the cell membrane. The protein localises to the sarcolemma. The catalysed reaction is D-fructose(out) = D-fructose(in). Its function is as follows. Functions as a fructose transporter that has only low activity with other monosaccharides. Can mediate the uptake of deoxyglucose, but with low efficiency. Essential for fructose uptake in the small intestine. Plays a role in the regulation of salt uptake and blood pressure in response to dietary fructose. Required for the development of high blood pressure in response to high dietary fructose intake. The polypeptide is Solute carrier family 2, facilitated glucose transporter member 5 (Ovis aries (Sheep)).